A 522-amino-acid chain; its full sequence is Putative E3 ubiquitin-protein ligase RING1a (522 aa).

Over residues 1–10 (MSVKNNSFSS) the composition is skewed to polar residues. The segment at 1–119 (MSVKNNSFSS…RSPSSISGDQ (119 aa)) is disordered. Positions 32–64 (LQEKDETKEEKEGDEEVKHDEAEEDQEVVKPND) are enriched in basic and acidic residues. Residues 65–106 (AEEDDDGDDAEEDEEEEVEAEEDEEAEEEEEEEEEEEEEEED) show a composition bias toward acidic residues. Residues 136-176 (CPICLGIIKKTRTVMECLHRFCRECIDKSMRLGNNECPACR) form an RING-type zinc finger. 2 disordered regions span residues 250–347 (VLMR…DTKG) and 363–385 (RGGT…KSVR). A compositionally biased stretch (basic and acidic residues) spans 287–306 (NNNRGRDKDSSSDERGTEVR). Residues 316-325 (SRSTQHPSSS) are compositionally biased toward low complexity. Polar residues-rich tracts occupy residues 326–336 (GANKNNGNCAD) and 366–384 (TRSN…SKSV).

In terms of assembly, homodimer or heterodimer with RING1B. Interacts with CLF. Component of the PRC1-like complex, at least composed of RING1A, RING1B and LHP1.

It localises to the nucleus. The catalysed reaction is S-ubiquitinyl-[E2 ubiquitin-conjugating enzyme]-L-cysteine + [acceptor protein]-L-lysine = [E2 ubiquitin-conjugating enzyme]-L-cysteine + N(6)-ubiquitinyl-[acceptor protein]-L-lysine.. The protein operates within protein modification; protein ubiquitination. Its function is as follows. Putative E3 ubiquitin-protein ligase that mediates monoubiquitination of 'Lys-119' of histone H2A (H2AK119ub), thereby playing a central role in histone code and gene regulation. Functionally, as part of the PRC1-like complex, repress class I KNOX gene expression. PcG PRC1 complex maintains the transcriptionally repressive state of many genes, including Hox genes, throughout development. PcG PRC1 complex acts via chromatin remodeling and modification of histones, rendering chromatin heritably changed in its expressibility. The protein is Putative E3 ubiquitin-protein ligase RING1a (RING1A) of Arabidopsis thaliana (Mouse-ear cress).